Here is a 179-residue protein sequence, read N- to C-terminus: Inosine/xanthosine triphosphatase (179 aa).

Residues 8 to 13 (TTNPAK) and 68 to 69 (EA) each bind substrate. Glu-68 contributes to the Mg(2+) binding site.

Belongs to the YjjX NTPase family. In terms of assembly, homodimer. Mg(2+) is required as a cofactor. The cofactor is Mn(2+).

It carries out the reaction XTP + H2O = XDP + phosphate + H(+). The catalysed reaction is ITP + H2O = IDP + phosphate + H(+). Phosphatase that hydrolyzes non-canonical purine nucleotides such as XTP and ITP to their respective diphosphate derivatives. Probably excludes non-canonical purines from DNA/RNA precursor pool, thus preventing their incorporation into DNA/RNA and avoiding chromosomal lesions. This Serratia proteamaculans (strain 568) protein is Inosine/xanthosine triphosphatase.